The following is a 242-amino-acid chain: Probable septum site-determining protein MinC (242 aa).

Residues 120–135 (APKKVEEKPAEPEHKP) show a composition bias toward basic and acidic residues. Residues 120 to 144 (APKKVEEKPAEPEHKPSRIVTSPVR) are disordered.

This sequence belongs to the MinC family. Interacts with MinD and FtsZ.

Cell division inhibitor that blocks the formation of polar Z ring septums. Rapidly oscillates between the poles of the cell to destabilize FtsZ filaments that have formed before they mature into polar Z rings. Prevents FtsZ polymerization. The polypeptide is Probable septum site-determining protein MinC (Ectopseudomonas mendocina (strain ymp) (Pseudomonas mendocina)).